The primary structure comprises 362 residues: S-adenosylmethionine decarboxylase proenzyme (362 aa).

Residues Glu-11 and Glu-14 contribute to the active site. Residue Ser-71 is the Schiff-base intermediate with substrate; via pyruvic acid of the active site. Ser-71 bears the Pyruvic acid (Ser); by autocatalysis mark. Catalysis depends on Cys-85, which acts as the Proton donor; for catalytic activity. Active-site proton acceptor; for processing activity residues include Ser-234 and His-247.

The protein belongs to the eukaryotic AdoMetDC family. Pyruvate serves as cofactor. In terms of processing, is synthesized initially as an inactive proenzyme. Formation of the active enzyme involves a self-maturation process in which the active site pyruvoyl group is generated from an internal serine residue via an autocatalytic post-translational modification. Two non-identical subunits are generated from the proenzyme in this reaction, and the pyruvate is formed at the N-terminus of the alpha chain, which is derived from the carboxyl end of the proenzyme. The post-translation cleavage follows an unusual pathway, termed non-hydrolytic serinolysis, in which the side chain hydroxyl group of the serine supplies its oxygen atom to form the C-terminus of the beta chain, while the remainder of the serine residue undergoes an oxidative deamination to produce ammonia and the pyruvoyl group blocking the N-terminus of the alpha chain.

The catalysed reaction is S-adenosyl-L-methionine + H(+) = S-adenosyl 3-(methylsulfanyl)propylamine + CO2. The protein operates within amine and polyamine biosynthesis; S-adenosylmethioninamine biosynthesis; S-adenosylmethioninamine from S-adenosyl-L-methionine: step 1/1. The polypeptide is S-adenosylmethionine decarboxylase proenzyme (SAMDC) (Ipomoea nil (Japanese morning glory)).